The following is a 162-amino-acid chain: Cyclic pyranopterin monophosphate synthase (162 aa).

Residues 75–77 (MCH) and 115–116 (ME) contribute to the substrate site. The active site involves Asp-130.

It belongs to the MoaC family. As to quaternary structure, homohexamer; trimer of dimers.

The catalysed reaction is (8S)-3',8-cyclo-7,8-dihydroguanosine 5'-triphosphate = cyclic pyranopterin phosphate + diphosphate. It participates in cofactor biosynthesis; molybdopterin biosynthesis. Functionally, catalyzes the conversion of (8S)-3',8-cyclo-7,8-dihydroguanosine 5'-triphosphate to cyclic pyranopterin monophosphate (cPMP). The sequence is that of Cyclic pyranopterin monophosphate synthase from Geobacillus kaustophilus (strain HTA426).